Here is a 503-residue protein sequence, read N- to C-terminus: LEM domain-containing protein 2 (503 aa).

An N-acetylalanine modification is found at alanine 2. The region spanning 2–42 (AGLSDLELRRELQALGFQPGPITDTTRDVYRNKLRRLRGEA) is the LEM domain. The span at 42–74 (ARLRDEERLREEARPRGEERLREEARLREDAPL) shows a compositional bias: basic and acidic residues. 2 disordered regions span residues 42-97 (ARLR…SGSA) and 127-157 (AQLR…GPGL). The interval 74–130 (LRARPAAASPRAEPWLSQPASGSAYATPGAYGDIRPSAASWVGSRGLAYPARPAQLR) is required for nuclear retention and interaction with LMNA isoform C. Residues 75 to 87 (RARPAAASPRAEP) show a composition bias toward low complexity. 2 positions are modified to phosphoserine: serine 166 and serine 175. The tract at residues 172–198 (LPSSLLGPDPRPGLRATRAGPAGAARA) is disordered. Residues 184–197 (GLRATRAGPAGAAR) show a composition bias toward low complexity. Transmembrane regions (helical) follow at residues 213 to 233 (LLLW…WVKM) and 377 to 397 (VTNV…LILL). A winged-Helix (WH) region spans residues 395–503 (ILLKYRWRKL…KPSSFSDSER (109 aa)). Residues serine 497, serine 499, and serine 501 each carry the phosphoserine modification.

Interacts (via N-terminus) with LMNA isoform C (via C-terminus) (in vitro). Interacts (via LEM domain) with BANF1. Interacts (via C-terminus) with CHMP7. Interacts (via N-terminus) with tubulin; the interaction causes microtubule bundling and stabilization (in vitro). Phosphorylated; strongly phosphorylated in mitosis compared to G1/S. In terms of tissue distribution, ubiquitously expressed, including bone marrow, brain, kidney, colon, skeletal muscle, thymus, testis and uterus.

Its subcellular location is the nucleus inner membrane. The protein resides in the nucleus envelope. It is found in the cytoplasm. The protein localises to the cytoskeleton. It localises to the spindle. Functionally, nuclear lamina-associated inner nuclear membrane protein that is involved in nuclear structure organization, maintenance of nuclear envelope (NE) integrity and NE reformation after mitosis. Plays a role as transmembrane adapter for the endosomal sorting complexes required for transport (ESCRT), and is thereby involved in ESCRT-mediated NE reformation. Promotes ESCRT-mediated NE closure by recruiting CHMP7 and downstream ESCRT-III proteins IST1/CHMP8 and CHMP2A to the reforming NE during anaphase. During nuclear reassembly, condenses into a liquid-like coating around microtubule spindles and coassembles with CHMP7 to form a macromolecular O-ring seal at the confluence between membranes, chromatin, and the spindle to facilitate early nuclear sealing. Plays a role in the organization of heterochromatin associated with the NE and in the maintenance of NE organization under mechanical stress. Required for embryonic development and involved in regulation of several signaling pathways such as MAPK and AKT. Required for myoblast differentiation involving regulation of ERK signaling. Essential for cardiac homeostasis and proper heart function. The polypeptide is LEM domain-containing protein 2 (LEMD2) (Homo sapiens (Human)).